A 369-amino-acid chain; its full sequence is Probable serine/threonine-protein kinase DDB_G0291350 (369 aa).

Residues 22–367 enclose the Protein kinase domain; it reads YTVNRILGEG…QVIERINQII (346 aa). ATP is bound by residues 28 to 36 and K51; that span reads LGEGGFSFV. Catalysis depends on D159, which acts as the Proton acceptor. The segment at 169–225 is disordered; sequence NLRRPSNNNNNNNNNNNNNNNNNNNNNNNNNNNNNNNNNNNNNNNNNNNNNNNSEDS. Over residues 175–221 the composition is skewed to low complexity; the sequence is NNNNNNNNNNNNNNNNNNNNNNNNNNNNNNNNNNNNNNNNNNNNNNN.

This sequence belongs to the protein kinase superfamily. Ser/Thr protein kinase family.

The catalysed reaction is L-seryl-[protein] + ATP = O-phospho-L-seryl-[protein] + ADP + H(+). It carries out the reaction L-threonyl-[protein] + ATP = O-phospho-L-threonyl-[protein] + ADP + H(+). This Dictyostelium discoideum (Social amoeba) protein is Probable serine/threonine-protein kinase DDB_G0291350.